Here is a 161-residue protein sequence, read N- to C-terminus: 4-hydroxybenzoyl-CoA reductase subunit gamma (161 aa).

In terms of domain architecture, 2Fe-2S ferredoxin-type spans asparagine 3–leucine 79. [2Fe-2S] cluster is bound by residues cysteine 41, cysteine 46, cysteine 49, cysteine 61, cysteine 100, cysteine 103, cysteine 135, and cysteine 137.

In terms of assembly, heterohexamer of two alpha, two beta and two gamma subunits. It depends on [2Fe-2S] cluster as a cofactor.

The catalysed reaction is oxidized 2[4Fe-4S]-[ferredoxin] + benzoyl-CoA + H2O = 4-hydroxybenzoyl-CoA + reduced 2[4Fe-4S]-[ferredoxin] + 2 H(+). Its activity is regulated as follows. Inactivated by low concentrations of cyanide in vitro. In terms of biological role, component of a complex that catalyzes the reductive dehydroxylation of 4-hydroxybenzoyl-CoA to benzoyl-CoA. Reaction is not reversible. Is a key enzyme in the anaerobic degradation of phenolic compounds. The polypeptide is 4-hydroxybenzoyl-CoA reductase subunit gamma (hcrC) (Thauera aromatica).